We begin with the raw amino-acid sequence, 301 residues long: Glycine--tRNA ligase alpha subunit (301 aa).

Belongs to the class-II aminoacyl-tRNA synthetase family. In terms of assembly, tetramer of two alpha and two beta subunits.

The protein resides in the cytoplasm. It catalyses the reaction tRNA(Gly) + glycine + ATP = glycyl-tRNA(Gly) + AMP + diphosphate. This is Glycine--tRNA ligase alpha subunit from Nitrosospira multiformis (strain ATCC 25196 / NCIMB 11849 / C 71).